A 455-amino-acid chain; its full sequence is Hexokinase-2 (455 aa).

Residues 3–445 (ANFQQAVKKL…SGIGAALCAL (443 aa)) form the Hexokinase domain. The segment at 57–195 (TGAETGDFLA…NLPIRIEAVI (139 aa)) is hexokinase small subdomain. 68 to 73 (DFGGTN) lines the ATP pocket. Substrate contacts are provided by residues 144–145 (SY), 161–162 (TK), and 196–197 (ND). Residues 196–434 (NDTVGTLVTR…KLISIGIAKD (239 aa)) form a hexokinase large subdomain region. Thr-222 lines the ATP pocket. The substrate site is built by Asn-225, Glu-252, and Glu-283. ATP contacts are provided by residues 288 to 289 (GM), 325 to 329 (TSVLS), and 400 to 404 (SLVEH).

It belongs to the hexokinase family. Monomer.

The catalysed reaction is a D-hexose + ATP = a D-hexose 6-phosphate + ADP + H(+). The enzyme catalyses D-mannose + ATP = D-mannose 6-phosphate + ADP + H(+). It catalyses the reaction D-fructose + ATP = D-fructose 6-phosphate + ADP + H(+). It carries out the reaction D-glucose + ATP = D-glucose 6-phosphate + ADP + H(+). It functions in the pathway carbohydrate metabolism; hexose metabolism. It participates in carbohydrate degradation; glycolysis; D-glyceraldehyde 3-phosphate and glycerone phosphate from D-glucose: step 1/4. Functionally, catalyzes the phosphorylation of hexose (six-carbon sugars) to hexose 6-phosphate. Phosphorylates D-glucose, D-fructose and D-mannose. Compared to hxk1, has a much higher affinity for D-glucose. Constitutes the initial enzyme of glycolysis by catalyzing the phosphorylation of glucose to D-glucose 6-phosphate. This is Hexokinase-2 from Schizosaccharomyces pombe (strain 972 / ATCC 24843) (Fission yeast).